The following is a 177-amino-acid chain: Large ribosomal subunit protein uL6 (177 aa).

It belongs to the universal ribosomal protein uL6 family. As to quaternary structure, part of the 50S ribosomal subunit.

This protein binds to the 23S rRNA, and is important in its secondary structure. It is located near the subunit interface in the base of the L7/L12 stalk, and near the tRNA binding site of the peptidyltransferase center. The polypeptide is Large ribosomal subunit protein uL6 (Methylobacterium sp. (strain 4-46)).